The sequence spans 402 residues: Ferredoxin--NADP reductase (402 aa).

Positions 18-74 (NRLFIYEVVGLGGDGRNENSLVRKSGTTFITVPYARMNQEMQRITKLGGKIVSIRPA) constitute a CpcD-like domain. Residues 80-101 (IVSEGQSSAQASAQSPMASSTK) form a disordered region. The span at 85–99 (QSSAQASAQSPMASS) shows a compositional bias: low complexity. Positions 120-245 (KTPFLGKCIE…TGPVGKEMLL (126 aa)) constitute an FAD-binding FR-type domain. Residues 179–182 (RLYS), 200–202 (CVR), Tyr-206, 218–220 (VCS), and Thr-260 contribute to the FAD site. NADP(+) is bound by residues Ser-182 and Arg-202. Residues Thr-260, 292–293 (VP), 322–323 (SR), Lys-332, 332–336 (KVYVQ), 361–362 (GL), and Glu-400 contribute to the NADP(+) site.

The protein belongs to the ferredoxin--NADP reductase type 1 family. FAD is required as a cofactor.

Its subcellular location is the cellular thylakoid membrane. The catalysed reaction is 2 reduced [2Fe-2S]-[ferredoxin] + NADP(+) + H(+) = 2 oxidized [2Fe-2S]-[ferredoxin] + NADPH. The polypeptide is Ferredoxin--NADP reductase (petH) (Picosynechococcus sp. (strain ATCC 27264 / PCC 7002 / PR-6) (Agmenellum quadruplicatum)).